A 518-amino-acid polypeptide reads, in one-letter code: Glutamate--cysteine ligase (518 aa).

The protein belongs to the glutamate--cysteine ligase type 1 family. Type 1 subfamily.

It catalyses the reaction L-cysteine + L-glutamate + ATP = gamma-L-glutamyl-L-cysteine + ADP + phosphate + H(+). Its pathway is sulfur metabolism; glutathione biosynthesis; glutathione from L-cysteine and L-glutamate: step 1/2. The chain is Glutamate--cysteine ligase from Escherichia coli O139:H28 (strain E24377A / ETEC).